A 166-amino-acid chain; its full sequence is 3-isopropylmalate dehydratase small subunit (166 aa).

This sequence belongs to the LeuD family. LeuD type 2 subfamily. As to quaternary structure, heterodimer of LeuC and LeuD.

It catalyses the reaction (2R,3S)-3-isopropylmalate = (2S)-2-isopropylmalate. Its pathway is amino-acid biosynthesis; L-leucine biosynthesis; L-leucine from 3-methyl-2-oxobutanoate: step 2/4. In terms of biological role, catalyzes the isomerization between 2-isopropylmalate and 3-isopropylmalate, via the formation of 2-isopropylmaleate. This is 3-isopropylmalate dehydratase small subunit from Caldicellulosiruptor bescii (strain ATCC BAA-1888 / DSM 6725 / KCTC 15123 / Z-1320) (Anaerocellum thermophilum).